An 86-amino-acid polypeptide reads, in one-letter code: Small ribosomal subunit protein uS17 (86 aa).

Belongs to the universal ribosomal protein uS17 family. In terms of assembly, part of the 30S ribosomal subunit.

Its function is as follows. One of the primary rRNA binding proteins, it binds specifically to the 5'-end of 16S ribosomal RNA. This Desulfitobacterium hafniense (strain DSM 10664 / DCB-2) protein is Small ribosomal subunit protein uS17.